A 214-amino-acid chain; its full sequence is Large ribosomal subunit protein uL16 (214 aa).

Position 32 is a citrulline (R32). K175 is covalently cross-linked (Glycyl lysine isopeptide (Lys-Gly) (interchain with G-Cter in SUMO2)). K188 is covalently cross-linked (Glycyl lysine isopeptide (Lys-Gly) (interchain with G-Cter in ubiquitin)).

This sequence belongs to the universal ribosomal protein uL16 family. As to quaternary structure, component of the large ribosomal subunit. Mature ribosomes consist of a small (40S) and a large (60S) subunit. The 40S subunit contains about 33 different proteins and 1 molecule of RNA (18S). The 60S subunit contains about 49 different proteins and 3 molecules of RNA (28S, 5.8S and 5S). Post-translationally, citrullinated by PADI4. Ufmylated by UFL1.

The protein localises to the cytoplasm. Component of the large ribosomal subunit. Plays a role in the formation of actively translating ribosomes. May play a role in the embryonic brain development. In Pongo abelii (Sumatran orangutan), this protein is Large ribosomal subunit protein uL16.